Consider the following 536-residue polypeptide: Suppressor of cytokine signaling 5 (536 aa).

A required for interaction with IL4R region spans residues 1–50 (MDKVGKMWNNFKYRCQNLFGHEGGSRSENVDMNSNRCLSVKEKNISIGDS). The disordered stretch occupies residues 115 to 175 (SRHAPWGGKK…SVSSRTVGSR (61 aa)). Over residues 158-169 (VSSVHDMDSVSS) the composition is skewed to low complexity. An SH2 domain is found at 381 to 476 (CYWGVMDRYE…FFEPLLTISL (96 aa)). Positions 471–520 (LLTISLNRTFPFSLQYICRAVICRCTTYDGIDGLPLPSMLQDFLKEYHYK) constitute an SOCS box domain.

Interacts with IL4R; inhibits IL4 signaling. Interacts with EGFR. Interacts with ELOB and ELOC; mediates EGFR ubiquitination and degradation. In terms of processing, phosphorylated. Phosphorylation is induced by EGF.

It participates in protein modification; protein ubiquitination. In terms of biological role, SOCS family proteins form part of a classical negative feedback system that regulates cytokine signal transduction. May be a substrate-recognition component of a SCF-like ECS (Elongin BC-CUL2/5-SOCS-box protein) E3 ubiquitin-protein ligase complex which mediates the ubiquitination and subsequent proteasomal degradation of target proteins. Inhibits for instance EGF signaling by mediating the degradation of the EGF receptor/EGFR. Involved in the regulation of T-helper cell differentiation by inhibiting of the IL4 signaling pathway which promotes differentiation into the Th2 phenotype. Can also partially inhibit IL6 and LIF signaling. This Homo sapiens (Human) protein is Suppressor of cytokine signaling 5 (SOCS5).